Consider the following 317-residue polypeptide: Tyrosine--tRNA ligase (317 aa).

Tyr33 contributes to the L-tyrosine binding site. Positions 38 to 46 (PSGKIHMGH) match the 'HIGH' region motif. Residues Tyr155, Gln159, Asp162, and Gln177 each contribute to the L-tyrosine site. A 'KMSKS' region motif is present at residues 211–215 (KMASS). Ser214 provides a ligand contact to ATP.

This sequence belongs to the class-I aminoacyl-tRNA synthetase family. TyrS type 3 subfamily. Homodimer.

The protein localises to the cytoplasm. It carries out the reaction tRNA(Tyr) + L-tyrosine + ATP = L-tyrosyl-tRNA(Tyr) + AMP + diphosphate + H(+). In terms of biological role, catalyzes the attachment of tyrosine to tRNA(Tyr) in a two-step reaction: tyrosine is first activated by ATP to form Tyr-AMP and then transferred to the acceptor end of tRNA(Tyr). The protein is Tyrosine--tRNA ligase of Methanosarcina acetivorans (strain ATCC 35395 / DSM 2834 / JCM 12185 / C2A).